Reading from the N-terminus, the 180-residue chain is Large ribosomal subunit protein uL5 (180 aa).

The protein belongs to the universal ribosomal protein uL5 family. As to quaternary structure, part of the 50S ribosomal subunit; part of the 5S rRNA/L5/L18/L25 subcomplex. Contacts the 5S rRNA and the P site tRNA. Forms a bridge to the 30S subunit in the 70S ribosome.

In terms of biological role, this is one of the proteins that bind and probably mediate the attachment of the 5S RNA into the large ribosomal subunit, where it forms part of the central protuberance. In the 70S ribosome it contacts protein S13 of the 30S subunit (bridge B1b), connecting the 2 subunits; this bridge is implicated in subunit movement. Contacts the P site tRNA; the 5S rRNA and some of its associated proteins might help stabilize positioning of ribosome-bound tRNAs. This chain is Large ribosomal subunit protein uL5, found in Synechococcus sp. (strain JA-2-3B'a(2-13)) (Cyanobacteria bacterium Yellowstone B-Prime).